The chain runs to 110 residues: UPF0060 membrane protein RPA3838 (110 aa).

4 helical membrane passes run 4 to 24 (LLTF…FWAW), 31 to 51 (PLWL…LTLA), 59 to 79 (AYAA…WAIE), and 85 to 105 (QWDV…LFGP).

This sequence belongs to the UPF0060 family.

Its subcellular location is the cell inner membrane. The polypeptide is UPF0060 membrane protein RPA3838 (Rhodopseudomonas palustris (strain ATCC BAA-98 / CGA009)).